Consider the following 339-residue polypeptide: Sulfate/thiosulfate import ATP-binding protein CysA (339 aa).

Positions 3 to 237 (IAIRSVEKQF…PETAFVCGFV (235 aa)) constitute an ABC transporter domain. 35-42 (GPSGSGKT) serves as a coordination point for ATP.

Belongs to the ABC transporter superfamily. Sulfate/tungstate importer (TC 3.A.1.6) family. In terms of assembly, the complex is composed of two ATP-binding proteins (CysA), two transmembrane proteins (CysT and CysW) and a solute-binding protein (CysP).

It localises to the cell inner membrane. The enzyme catalyses sulfate(out) + ATP + H2O = sulfate(in) + ADP + phosphate + H(+). The catalysed reaction is thiosulfate(out) + ATP + H2O = thiosulfate(in) + ADP + phosphate + H(+). Its function is as follows. Part of the ABC transporter complex CysAWTP involved in sulfate/thiosulfate import. Responsible for energy coupling to the transport system. This chain is Sulfate/thiosulfate import ATP-binding protein CysA, found in Caulobacter vibrioides (strain ATCC 19089 / CIP 103742 / CB 15) (Caulobacter crescentus).